A 112-amino-acid chain; its full sequence is MSDAAVDTSSEITTKDLKEKKEVVEEAENGRDAPANGNAQNEENGEQEADNEVDEEEEEGGEEEEEEEEGDGEEEDGDEDEEAEAPTGKRVAEDDEDDDVETKKQKKTDEDD.

Met1 carries the post-translational modification N-acetylmethionine. The interval 1-112 (MSDAAVDTSS…KKQKKTDEDD (112 aa)) is disordered. Position 2 is an N-acetylserine; in Prothymosin alpha, N-terminally processed (Ser2). Residue Ser2 is modified to Phosphoserine. The residue at position 8 (Thr8) is a Phosphothreonine. Phosphoserine is present on residues Ser9 and Ser10. 2 positions are modified to phosphothreonine: Thr13 and Thr14. Positions 13-31 (TTKDLKEKKEVVEEAENGR) are enriched in basic and acidic residues. Lys15 is subject to N6-acetyllysine; alternate. An N6-succinyllysine; alternate modification is found at Lys15. Residues 43 to 84 (ENGEQEADNEVDEEEEEGGEEEEEEEEGDGEEEDGDEDEEAE) are compositionally biased toward acidic residues. Over residues 101 to 112 (ETKKQKKTDEDD) the composition is skewed to basic and acidic residues. Thr102 bears the Phosphothreonine mark. At Lys103 the chain carries N6-acetyllysine; alternate. A Glycyl lysine isopeptide (Lys-Gly) (interchain with G-Cter in SUMO2); alternate cross-link involves residue Lys103. A Phosphothreonine modification is found at Thr108.

It belongs to the pro/parathymosin family. As to quaternary structure, interacts with NUPR1; regulates apoptotic process. Post-translationally, covalently linked to a small RNA of about 20 nucleotides.

The protein resides in the nucleus. Its function is as follows. Prothymosin alpha may mediate immune function by conferring resistance to certain opportunistic infections. This Rattus norvegicus (Rat) protein is Prothymosin alpha (Ptma).